Consider the following 925-residue polypeptide: Probable disease resistance protein At1g61310 (925 aa).

Residues Gly-25 to Glu-69 adopt a coiled-coil conformation. A disordered region spans residues Asn-134–Pro-154. The NB-ARC domain occupies Ser-139–Val-442. Gly-181–Thr-188 serves as a coordination point for ATP. LRR repeat units follow at residues Ala-525–Ser-546, Glu-547–Tyr-568, Lys-571–Val-594, Ser-595–Lys-617, Lys-618–Leu-640, and Ser-641–Gln-663.

This sequence belongs to the disease resistance NB-LRR family.

Its function is as follows. Probable disease resistance protein. This is Probable disease resistance protein At1g61310 from Arabidopsis thaliana (Mouse-ear cress).